The chain runs to 157 residues: Putative electron transport protein YsaA (157 aa).

4 consecutive 4Fe-4S ferredoxin-type domains span residues 2-32 (NRFIIADATKCIGCRTCEVACAVSHHENQDC), 48-80 (KDHCWTTAVACHQCEDAPCANVCPVDAISREHG), 80-109 (GHIFVEQTRCIGCKSCMLACPFGAMEVVSS), and 112-144 (KARAIKCDLCWHRETGPACVEACPTKALQCMDV). [4Fe-4S] cluster-binding residues include C12, C15, C18, C22, C58, C61, C66, C70, C89, C92, C95, C99, C118, C121, C130, and C134.

This Escherichia coli (strain K12) protein is Putative electron transport protein YsaA (ysaA).